We begin with the raw amino-acid sequence, 420 residues long: Glucose-1-phosphate adenylyltransferase (420 aa).

Residues Tyr-107, Gly-172, 187-188 (EK), and Ser-205 each bind alpha-D-glucose 1-phosphate.

This sequence belongs to the bacterial/plant glucose-1-phosphate adenylyltransferase family. In terms of assembly, homotetramer.

It carries out the reaction alpha-D-glucose 1-phosphate + ATP + H(+) = ADP-alpha-D-glucose + diphosphate. Its pathway is glycan biosynthesis; glycogen biosynthesis. Functionally, involved in the biosynthesis of ADP-glucose, a building block required for the elongation reactions to produce glycogen. Catalyzes the reaction between ATP and alpha-D-glucose 1-phosphate (G1P) to produce pyrophosphate and ADP-Glc. In Bradyrhizobium diazoefficiens (strain JCM 10833 / BCRC 13528 / IAM 13628 / NBRC 14792 / USDA 110), this protein is Glucose-1-phosphate adenylyltransferase.